A 303-amino-acid polypeptide reads, in one-letter code: Ribosomal protein L11 methyltransferase (303 aa).

Residues T144, G165, D187, and N235 each coordinate S-adenosyl-L-methionine.

It belongs to the methyltransferase superfamily. PrmA family.

The protein resides in the cytoplasm. The catalysed reaction is L-lysyl-[protein] + 3 S-adenosyl-L-methionine = N(6),N(6),N(6)-trimethyl-L-lysyl-[protein] + 3 S-adenosyl-L-homocysteine + 3 H(+). Methylates ribosomal protein L11. In Prochlorococcus marinus (strain MIT 9312), this protein is Ribosomal protein L11 methyltransferase.